The chain runs to 181 residues: CASP-like protein 1F2 (181 aa).

At 1-18 (MADIETKSSQNQPLKTQN) the chain is on the cytoplasmic side. The chain crosses the membrane as a helical span at residues 19–39 (IFIGAQIFLRIVVIAASFAST). Over 40–70 (WLMLTNKQTIDIGGFVLDANYSYSPEFKFLS) the chain is Extracellular. Residue N59 is glycosylated (N-linked (GlcNAc...) asparagine). A helical membrane pass occupies residues 71-91 (YANIVVGAFSFVSLLFLVLVG). Residues 92–100 (RRSSNPTYY) are Cytoplasmic-facing. The chain crosses the membrane as a helical span at residues 101-121 (FILFLHDLALMSLVLGGCAAA). The Extracellular portion of the chain corresponds to 122-150 (TVIGSLGKYGNSHTGWMQICDHFGKFCKR). A helical membrane pass occupies residues 151–171 (ATTSVAFSYFSLVCLLILTIT). Over 172–181 (SASKSRQIQV) the chain is Cytoplasmic.

This sequence belongs to the Casparian strip membrane proteins (CASP) family. As to quaternary structure, homodimer and heterodimers.

It is found in the cell membrane. The sequence is that of CASP-like protein 1F2 from Populus trichocarpa (Western balsam poplar).